The following is a 380-amino-acid chain: Ceramide synthase 2 (380 aa).

Residues 1 to 40 (MLQTLHDYFWWERLWLPVNLTWADLEDRDGRVYAKASDLY) are Lumenal-facing. The N-linked (GlcNAc...) asparagine glycan is linked to Asn19. A helical transmembrane segment spans residues 41 to 61 (ITLPLALLFLIIRYFFELYVA). The homeobox-like stretch occupies residues 67 to 128 (LLNVKEKTRL…RRRRNQDRPS (62 aa)). Residues 131 to 332 (KKFREASWRF…ILRMAHKFIT (202 aa)) enclose the TLC domain. 4 helical membrane passes run 140-160 (FTFY…KPWF), 181-201 (WYYM…ASDV), 209-229 (QIIH…ANYV), and 264-284 (IFIV…PFWI). Positions 291–300 (YPLELYPAFF) match the Last loop motif motif. The helical transmembrane segment at 304 to 324 (FFNFMMGVLQLLHIFWAYLIL) threads the bilayer. At 325–380 (RMAHKFITGKVVEDERSDREETESSEGEEAAAGGGAKNRPLANGHPILNNNHRKND) the chain is on the cytoplasmic side. Residues 338–380 (DERSDREETESSEGEEAAAGGGAKNRPLANGHPILNNNHRKND) are disordered. Ser341 carries the post-translational modification Phosphoserine. The segment covering 344-353 (EETESSEGEE) has biased composition (acidic residues). Thr346 is subject to Phosphothreonine. Phosphoserine occurs at positions 348 and 349.

Interacts with ATP6V0C, ASGR1, ASGR2 and SLC22A1/OCT1. Interacts with ELOV1, HSD17B12 and TECR. Interacts with NDUFS2. In terms of processing, acetylated. Deacetylation by SIRT3 increases enzyme activity and promotes mitochondrial ceramide accumulation. Post-translationally, phosphorylated at the C-terminus by CK2, leading to increase the ceramide synthase activity.

The protein resides in the endoplasmic reticulum membrane. It carries out the reaction a very long-chain fatty acyl-CoA + a sphingoid base = an N-(very-long-chain fatty acyl)-sphingoid base + CoA + H(+). The enzyme catalyses docosanoyl-CoA + sphinganine = N-docosanoylsphinganine + CoA + H(+). The catalysed reaction is tetracosanoyl-CoA + sphinganine = N-tetracosanoylsphinganine + CoA + H(+). It catalyses the reaction hexacosanoyl-CoA + sphinganine = N-hexacosanoylsphinganine + CoA + H(+). It carries out the reaction (15Z)-tetracosenoyl-CoA + sphinganine = N-(15Z-tetracosenoyl)-sphinganine + CoA + H(+). The enzyme catalyses 2-hydroxytetracosanoyl-CoA + sphinganine = N-(2-hydroxytetracosanoyl)-sphinganine + CoA + H(+). The catalysed reaction is 2-hydroxydocosanoyl-CoA + sphinganine = N-(2-hydroxydocosanoyl)-sphinganine + CoA + H(+). It catalyses the reaction 2-hydroxytetracosenoyl-CoA + sphinganine = N-(2-hydroxytetracosenoyl)-sphinganine + CoA + H(+). It carries out the reaction tetracosenoyl-CoA + sphinganine = an N-tetracosenoylsphinganine + CoA + H(+). The enzyme catalyses hexacosenoyl-CoA + sphinganine = N-hexacosenoylsphinganine + CoA + H(+). The catalysed reaction is tetracosanoyl-CoA + sphing-4-enine = N-tetracosanoyl-sphing-4-enine + CoA + H(+). It catalyses the reaction tetracosenoyl-CoA + sphing-4-enine = N-(tetracosenoyl)-sphing-4-enine + CoA + H(+). It carries out the reaction heptadecasphing-4-enine + tetracosanoyl-CoA = N-tetracosanoyl-heptadecasphing-4-enine + CoA + H(+). The enzyme catalyses a fatty acyl-CoA + sphing-4-enine = an N-acylsphing-4-enine + CoA + H(+). The catalysed reaction is sphing-4-enine + hexadecanoyl-CoA = N-hexadecanoylsphing-4-enine + CoA + H(+). It catalyses the reaction sphing-4-enine + octadecanoyl-CoA = N-octadecanoylsphing-4-enine + CoA + H(+). It carries out the reaction eicosanoyl-CoA + sphing-4-enine = N-eicosanoyl-sphing-4-enine + CoA + H(+). The enzyme catalyses sphinganine + hexadecanoyl-CoA = N-hexadecanoylsphinganine + CoA + H(+). The catalysed reaction is sphinganine + octadecanoyl-CoA = N-(octadecanoyl)-sphinganine + CoA + H(+). It catalyses the reaction sphinganine + (9Z)-octadecenoyl-CoA = N-(9Z-octadecenoyl)-sphinganine + CoA + H(+). It carries out the reaction eicosanoyl-CoA + sphinganine = N-eicosanoylsphinganine + CoA + H(+). It functions in the pathway lipid metabolism; sphingolipid metabolism. Ceramide synthase activity is inhibited by sphingosine-1-phosphate. Ceramide synthase that catalyzes the transfer of the acyl chain from acyl-CoA to a sphingoid base, with high selectivity toward very-long-chain fatty acyl-CoA (chain length C22-C27). N-acylates sphinganine and sphingosine bases to form dihydroceramides and ceramides in de novo synthesis and salvage pathways, respectively. Plays a non-redundant role in the synthesis of ceramides with very-long-chain fatty acids in kidney, liver and brain. Regulates the abundance of myelin-specific sphingolipids galactosylceramide and sulfatide that affects myelin sheath architecture and motor neuron functions. The chain is Ceramide synthase 2 from Bos taurus (Bovine).